Reading from the N-terminus, the 113-residue chain is U11-theraphotoxin-Hhn1a (113 aa).

Positions 1–21 are cleaved as a signal peptide; it reads MNTVRVTFLLVFVLAVSLGQA. A propeptide spanning residues 22-74 is cleaved from the precursor; that stretch reads DKDENRMEMQEKTEQGKSYLDFAENLLLQKLEELEAKPLEEDSEESRNSRQKR. The span at 57–69 shows a compositional bias: basic and acidic residues; sequence AKPLEEDSEESRN. Residues 57-83 are disordered; it reads AKPLEEDSEESRNSRQKRCIGEGVPCD. 3 disulfide bridges follow: Cys75-Cys90, Cys82-Cys95, and Cys89-Cys110.

It belongs to the neurotoxin 14 (magi-1) family. 01 (HNTX-16) subfamily. In terms of tissue distribution, expressed by the venom gland.

The protein resides in the secreted. Probable ion channel inhibitor. The chain is U11-theraphotoxin-Hhn1a from Cyriopagopus hainanus (Chinese bird spider).